Consider the following 1170-residue polypeptide: DNA excision repair protein ERCC-5 (1170 aa).

Residues 1–78 are N-domain; sequence MGVQGLWKLL…RIRPIFVFDG (78 aa). At Lys8 the chain carries N6-acetyllysine. Mg(2+) is bound at residue Asp30. A DNA-binding; may bind to the undamaged single-strand DNA of the DNA repair bubble region spans residues 31–67; that stretch reads ISIWLNQALKGVRDSHGNVIENAHLLTLFHRLCKLLF. Residue Asp77 participates in Mg(2+) binding. The interval 79-784 is spacer region; sequence DAPLLKKQTL…LRLFGVPYIQ (706 aa). 3 disordered regions span residues 304–479, 520–587, and 600–701; these read DSES…RCDT, HVSG…PKAC, and LENA…ECLL. Positions 306 to 323 are enriched in low complexity; that stretch reads ESLPSSSNVHSVSSNLKS. Basic and acidic residues-rich tracts occupy residues 324-336 and 363-373; these read SPHE…REPE and SREGRQSKERN. The residue at position 384 (Ser384) is a Phosphoserine. Positions 455–474 are enriched in polar residues; sequence TSGSSANGQTDSAHSFTTAS. Over residues 539-551 the composition is skewed to basic and acidic residues; that stretch reads THSDQGIDIHPED. The segment covering 659–676 has biased composition (polar residues); the sequence is SVVSNSELQTESSEASTH. Basic and acidic residues predominate over residues 677–698; sequence LSEKDAEEPRETLEEGTSRDTE. A phosphoserine mark is found at Ser704 and Ser705. Residues 785–880 form an I-domain region; the sequence is APMEAEAQCA…VTAMEILNEF (96 aa). Mg(2+) contacts are provided by Glu788, Glu790, Asp809, and Asp811. Residues 819–835 form a DNA-binding; may bind to the undamaged single-strand DNA of the DNA repair bubble region; it reads HVYKNFFNKNKFVEYYQ. The DNA-binding; H2TH (helix-2turn-helix) motif which binds double-stranded DNA stretch occupies residues 847–879; the sequence is RNKLINLAYLLGSDYTEGIPTVGCVTAMEILNE. Position 860 (Asp860) interacts with Mg(2+). The segment at 911 to 917 is DNA-binding; may bind double-stranded DNA; the sequence is TKVKKKL. The tract at residues 980–1008 is interaction with PCNA; the sequence is LKHLNAHQTQLRIDSFFRLAQQEKQDAKL. Residues 1010-1170 are interaction with ERCC6/CSB; it reads KSHRLNRAVT…KSMKRRKKKT (161 aa). The disordered stretch occupies residues 1033–1146; it reads LTKVTEALDD…DDEDKAKTVL (114 aa). Residues 1041–1060 are compositionally biased toward basic and acidic residues; that stretch reads DDAKGKTQKRELPYKKETSV. The short motif at 1049–1065 is the Nuclear localization signal 1 element; sequence KRELPYKKETSVPKRRR. Over residues 1094–1110 the composition is skewed to polar residues; the sequence is SVMSARQRSAAESSKIS. The short motif at 1153-1170 is the Nuclear localization signal 2 element; it reads FGKKKLKLKSMKRRKKKT.

The protein belongs to the XPG/RAD2 endonuclease family. XPG subfamily. Monomer. Homodimer. Component of the homologous recombination repair (HR) complex composed of ERCC5/XPG, BRCA2, PALB2, DSS1 and RAD51. Within the complex, interacts with BRCA2 and PALB2. Interacts with RNA polymerase II. Interacts (via C-terminus) with ERCC6/CSB; the interaction stimulates ERCC6/CSB binding to the DNA repair bubble and ERCC6/CSB ATPase activity. May form a complex composed of RNA polymerase II, ERCC6/CSB and ERCC5/XPG which associates with the DNA repair bubble during transcription-coupled nucleotide excision repair. Interacts with BRCA1; the interaction promotes the release of BRCA1 from DNA. Interacts with PCNA. Interacts with NTHL1; the interaction stimulates NTHL1 activity and NTHL1 binding to its DNA substrate. It depends on Mg(2+) as a cofactor.

It localises to the nucleus. Its subcellular location is the chromosome. Functionally, single-stranded structure-specific DNA endonuclease involved in DNA excision repair. Makes the 3'incision in DNA nucleotide excision repair (NER). Binds and bends DNA repair bubble substrate and breaks base stacking at the single-strand/double-strand DNA junction of the DNA bubble. Plays a role in base excision repair (BER) by promoting the binding of DNA glycosylase NTHL1 to its substrate and increasing NTHL1 catalytic activity that removes oxidized pyrimidines from DNA. Involved in transcription-coupled nucleotide excision repair (TCR) which allows RNA polymerase II-blocking lesions to be rapidly removed from the transcribed strand of active genes. Functions during the initial step of TCR in cooperation with ERCC6/CSB to recognized stalled RNA polymerase II. Also, stimulates ERCC6/CSB binding to the DNA repair bubble and ERCC6/CSB ATPase activity. Required for DNA replication fork maintenance and preservation of genomic stability. Involved in homologous recombination repair (HRR) induced by DNA replication stress by recruiting RAD51, BRCA2, and PALB2 to the damaged DNA site. During HRR, binds to the replication fork with high specificity and stabilizes it. Also, acts upstream of HRR, to promote the release of BRCA1 from DNA. This is DNA excision repair protein ERCC-5 (Ercc5) from Mus musculus (Mouse).